A 142-amino-acid polypeptide reads, in one-letter code: Large ribosomal subunit protein uL11 (142 aa).

It belongs to the universal ribosomal protein uL11 family. Part of the ribosomal stalk of the 50S ribosomal subunit. Interacts with L10 and the large rRNA to form the base of the stalk. L10 forms an elongated spine to which L12 dimers bind in a sequential fashion forming a multimeric L10(L12)X complex. One or more lysine residues are methylated.

Functionally, forms part of the ribosomal stalk which helps the ribosome interact with GTP-bound translation factors. The protein is Large ribosomal subunit protein uL11 of Haemophilus influenzae (strain 86-028NP).